A 148-amino-acid chain; its full sequence is Endoribonuclease YbeY (148 aa).

Zn(2+)-binding residues include histidine 113, histidine 117, and histidine 123.

The protein belongs to the endoribonuclease YbeY family. Requires Zn(2+) as cofactor.

The protein resides in the cytoplasm. Single strand-specific metallo-endoribonuclease involved in late-stage 70S ribosome quality control and in maturation of the 3' terminus of the 16S rRNA. In Borrelia turicatae (strain 91E135), this protein is Endoribonuclease YbeY.